The primary structure comprises 605 residues: Sulfite reductase [NADPH] flavoprotein alpha-component (605 aa).

The Flavodoxin-like domain occupies 68–206; sequence VTVLYGSQTG…PAAEWLEGVL (139 aa). Residues 74 to 78, 121 to 126, and 154 to 185 contribute to the FMN site; these read SQTGN, STHGEG, and VLAL…KRIS. Residues 213–234 form a disordered region; sequence GGGSAAPAPAAASQTGESSYSR. An FAD-binding FR-type domain is found at 235 to 454; sequence TNPFRAEVLE…VQHNQNFKLP (220 aa). An FAD-binding site is contributed by 392 to 395; it reads RLYS. NADP(+)-binding positions include D495 and 525–533; that span reads SRDTEEKVY.

In terms of assembly, alpha(8)-beta(8). The alpha component is a flavoprotein, the beta component is a hemoprotein. Requires FAD as cofactor. The cofactor is FMN.

It catalyses the reaction hydrogen sulfide + 3 NADP(+) + 3 H2O = sulfite + 3 NADPH + 4 H(+). It participates in sulfur metabolism; hydrogen sulfide biosynthesis; hydrogen sulfide from sulfite (NADPH route): step 1/1. Its function is as follows. Component of the sulfite reductase complex that catalyzes the 6-electron reduction of sulfite to sulfide. This is one of several activities required for the biosynthesis of L-cysteine from sulfate. The flavoprotein component catalyzes the electron flow from NADPH -&gt; FAD -&gt; FMN to the hemoprotein component. The chain is Sulfite reductase [NADPH] flavoprotein alpha-component (cysJ) from Bacillus subtilis (strain 168).